The primary structure comprises 133 residues: Fatty acid-binding protein homolog 1 (133 aa).

Met-1 is modified (N-acetylmethionine). Hexadecanoate-binding positions include Arg-107 and 127-129; that span reads RTY.

This sequence belongs to the calycin superfamily. Fatty-acid binding protein (FABP) family.

Has been implicated in the acquisition, storage, and transport of lipids, and may be important to the organism since it is incapable of synthesizing most of its lipids de novo. This is Fatty acid-binding protein homolog 1 (FABP1) from Echinococcus granulosus (Hydatid tapeworm).